A 1257-amino-acid polypeptide reads, in one-letter code: ATP-binding cassette sub-family B member 5 (1257 aa).

The tract at residues Met1–Pro24 is disordered. Asn17 is a glycosylation site (N-linked (GlcNAc...) asparagine). A helical transmembrane segment spans residues Ile49–Leu69. Positions Ile49–Ala350 constitute an ABC transmembrane type-1 1 domain. Asn85 and Asn91 each carry an N-linked (GlcNAc...) asparagine glycan. 5 consecutive transmembrane segments (helical) span residues Tyr110 to Ile130, Lys181 to Val201, Gly203 to Ala223, Val294 to Leu314, and Ile322 to Ala342. N-linked (GlcNAc...) asparagine glycosylation is found at Asn371, Asn390, and Asn423. The ABC transporter 1 domain occupies Val386–Ser622. ATP is bound at residue Gly421–Ser428. Transmembrane regions (helical) follow at residues Val693 to Phe713 and Met737 to Tyr757. Positions Val693–Lys980 constitute an ABC transmembrane type-1 2 domain. N-linked (GlcNAc...) asparagine glycans are attached at residues Asn789 and Asn819. A helical transmembrane segment spans residues Val827 to Val847. A glycan (N-linked (GlcNAc...) asparagine) is linked at Asn910. 2 helical membrane-spanning segments follow: residues Ile917 to Phe937 and Met954 to Leu974. Positions Leu1015 to Ala1253 constitute an ABC transporter 2 domain. Gly1050 to Ser1057 lines the ATP pocket. N-linked (GlcNAc...) asparagine glycosylation is found at Asn1104 and Asn1188.

This sequence belongs to the ABC transporter superfamily. ABCB family. Multidrug resistance exporter (TC 3.A.1.201) subfamily. In terms of tissue distribution, expressed by CD133-expressing progenitor cells among epidermal melanocytes (at protein level). Widely expressed with specific expression in pigment cells. Highly expressed in several malignant tissues: highly expressed in clinical melanomas, with low expression in normal skin. In melanoma, marks malignant melanoma-initiating cells (MMIC), in which clinical virulence resides as a consequence of unlimited self-renewal capacity, resulting in inexorable tumor progression and metastasis. Also highly expressed in a number of leukemia cells. Expressed in basal limbal epithelium.

It is found in the cell membrane. It carries out the reaction daunorubicin(in) + ATP + H2O = daunorubicin(out) + ADP + phosphate + H(+). Its function is as follows. Energy-dependent efflux transporter responsible for decreased drug accumulation in multidrug-resistant cells. Specifically present in limbal stem cells, where it plays a key role in corneal development and repair. This chain is ATP-binding cassette sub-family B member 5, found in Homo sapiens (Human).